A 231-amino-acid chain; its full sequence is 5'-methylthioadenosine/S-adenosylhomocysteine nucleosidase (231 aa).

The Proton acceptor role is filled by Glu-12. Substrate is bound by residues Gly-78, Val-153, and 174-175 (ME). Asp-198 serves as the catalytic Proton donor.

Belongs to the PNP/UDP phosphorylase family. MtnN subfamily.

The catalysed reaction is S-adenosyl-L-homocysteine + H2O = S-(5-deoxy-D-ribos-5-yl)-L-homocysteine + adenine. It catalyses the reaction S-methyl-5'-thioadenosine + H2O = 5-(methylsulfanyl)-D-ribose + adenine. It carries out the reaction 5'-deoxyadenosine + H2O = 5-deoxy-D-ribose + adenine. Its pathway is amino-acid biosynthesis; L-methionine biosynthesis via salvage pathway; S-methyl-5-thio-alpha-D-ribose 1-phosphate from S-methyl-5'-thioadenosine (hydrolase route): step 1/2. Its function is as follows. Catalyzes the irreversible cleavage of the glycosidic bond in both 5'-methylthioadenosine (MTA) and S-adenosylhomocysteine (SAH/AdoHcy) to adenine and the corresponding thioribose, 5'-methylthioribose and S-ribosylhomocysteine, respectively. Also cleaves 5'-deoxyadenosine, a toxic by-product of radical S-adenosylmethionine (SAM) enzymes, into 5-deoxyribose and adenine. This Vibrio vulnificus (strain YJ016) protein is 5'-methylthioadenosine/S-adenosylhomocysteine nucleosidase.